A 248-amino-acid chain; its full sequence is Probable septum site-determining protein MinC (248 aa).

The segment at 94-126 (GMPPAMRGGQPAADFEAPAGEPQANPGAPEPQI) is disordered.

Belongs to the MinC family. As to quaternary structure, interacts with MinD and FtsZ.

Cell division inhibitor that blocks the formation of polar Z ring septums. Rapidly oscillates between the poles of the cell to destabilize FtsZ filaments that have formed before they mature into polar Z rings. Prevents FtsZ polymerization. This Brucella suis biovar 1 (strain 1330) protein is Probable septum site-determining protein MinC.